Consider the following 328-residue polypeptide: Stress response kinase A (328 aa).

Asp201 acts as the Proton acceptor in catalysis. 2 residues coordinate Mg(2+): Asn206 and Asp217. Asp217 is a catalytic residue.

This sequence belongs to the SrkA/RdoA protein kinase family. In terms of assembly, monomer. Requires Mg(2+) as cofactor.

The protein resides in the cytoplasm. It carries out the reaction L-seryl-[protein] + ATP = O-phospho-L-seryl-[protein] + ADP + H(+). The catalysed reaction is L-threonyl-[protein] + ATP = O-phospho-L-threonyl-[protein] + ADP + H(+). In terms of biological role, a protein kinase that phosphorylates Ser and Thr residues. Probably acts to suppress the effects of stress linked to accumulation of reactive oxygen species. Probably involved in the extracytoplasmic stress response. The chain is Stress response kinase A from Salmonella choleraesuis (strain SC-B67).